A 205-amino-acid chain; its full sequence is Holliday junction branch migration complex subunit RuvA (205 aa).

The tract at residues 1–62 (MFEYVTGYVE…EDIMALYGFK (62 aa)) is domain I. Positions 63–141 (TREERLLFTK…DVVPDAFVDL (79 aa)) are domain II. The tract at residues 142–152 (FSDTERFDEKK) is flexible linker. Residues 153-205 (GTSAELDEALEALRALGYAEREVSRVVPELLKESLTTDQYIKKALSLLLNGKR) are domain III.

The protein belongs to the RuvA family. In terms of assembly, homotetramer. Forms an RuvA(8)-RuvB(12)-Holliday junction (HJ) complex. HJ DNA is sandwiched between 2 RuvA tetramers; dsDNA enters through RuvA and exits via RuvB. An RuvB hexamer assembles on each DNA strand where it exits the tetramer. Each RuvB hexamer is contacted by two RuvA subunits (via domain III) on 2 adjacent RuvB subunits; this complex drives branch migration. In the full resolvosome a probable DNA-RuvA(4)-RuvB(12)-RuvC(2) complex forms which resolves the HJ.

The protein resides in the cytoplasm. Its function is as follows. The RuvA-RuvB-RuvC complex processes Holliday junction (HJ) DNA during genetic recombination and DNA repair, while the RuvA-RuvB complex plays an important role in the rescue of blocked DNA replication forks via replication fork reversal (RFR). RuvA specifically binds to HJ cruciform DNA, conferring on it an open structure. The RuvB hexamer acts as an ATP-dependent pump, pulling dsDNA into and through the RuvAB complex. HJ branch migration allows RuvC to scan DNA until it finds its consensus sequence, where it cleaves and resolves the cruciform DNA. This is Holliday junction branch migration complex subunit RuvA from Bacillus cereus (strain G9842).